A 103-amino-acid chain; its full sequence is N(4)-acetylcytidine amidohydrolase (103 aa).

Residues 6-100 (ITFFQRFQND…NQMQFYVIDF (95 aa)) form the ASCH domain. K21 serves as the catalytic Proton acceptor. T24 acts as the Nucleophile in catalysis. The active-site Proton donor is E74.

It belongs to the N(4)-acetylcytidine amidohydrolase family.

The catalysed reaction is N(4)-acetylcytidine + H2O = cytidine + acetate + H(+). It carries out the reaction N(4)-acetyl-2'-deoxycytidine + H2O = 2'-deoxycytidine + acetate + H(+). The enzyme catalyses N(4)-acetylcytosine + H2O = cytosine + acetate + H(+). Its function is as follows. Catalyzes the hydrolysis of N(4)-acetylcytidine (ac4C). This is N(4)-acetylcytidine amidohydrolase (yqfB) from Salmonella arizonae (strain ATCC BAA-731 / CDC346-86 / RSK2980).